A 31-amino-acid chain; its full sequence is Kappa-sparatoxin-Hv1c (31 aa).

Cystine bridges form between Cys2/Cys16, Cys9/Cys21, and Cys15/Cys25. Trp31 is modified (tryptophan amide).

In terms of tissue distribution, expressed by the venom gland.

The protein resides in the secreted. Functionally, blocks transient outward voltage-gated potassium channels in rat ventricular myocytes (thus prolonging action-potential duration) and rat Kv4.2/KCNA4 channels expressed in Xenopus oocytes. Is also a weak blocker of calcium channels in rat cerebellar granule cells. In Heteropoda venatoria (Brown huntsman spider), this protein is Kappa-sparatoxin-Hv1c.